We begin with the raw amino-acid sequence, 413 residues long: Putative competence-damage inducible protein (413 aa).

The protein belongs to the CinA family.

The polypeptide is Putative competence-damage inducible protein (Thermoanaerobacter sp. (strain X514)).